The following is a 763-amino-acid chain: G protein-regulated inducer of neurite outgrowth 3 (763 aa).

Disordered stretches follow at residues 1–48 (MGTV…IGNV), 65–111 (QACV…APGL), and 192–268 (ENSQ…GATC). Positions 27–44 (ESQSVSPQPAQPDNNASG) are enriched in polar residues. Basic and acidic residues predominate over residues 93–104 (KTPDDFLLHGSK). Polar residues predominate over residues 237–250 (ENKQPSATALNTTA). Residues Ser323 and Ser359 each carry the phosphoserine modification. 3 disordered regions span residues 420–452 (TSSQ…PDFQ), 471–624 (NQGL…PRRG), and 711–737 (VKTQ…GRQH). Residues 437 to 450 (KEATSRQPEGTNPD) are compositionally biased toward polar residues. Composition is skewed to basic and acidic residues over residues 480 to 496 (REPE…KAES) and 518 to 539 (PTDK…KDHA). Residues 593–609 (SLSLPSDGTGDSSPGSG) are compositionally biased toward low complexity.

May be involved in neurite outgrowth. The polypeptide is G protein-regulated inducer of neurite outgrowth 3 (Gprin3) (Mus musculus (Mouse)).